Reading from the N-terminus, the 229-residue chain is Indole-3-glycerol phosphate synthase (229 aa).

The protein belongs to the TrpC family.

It catalyses the reaction 1-(2-carboxyphenylamino)-1-deoxy-D-ribulose 5-phosphate + H(+) = (1S,2R)-1-C-(indol-3-yl)glycerol 3-phosphate + CO2 + H2O. It functions in the pathway amino-acid biosynthesis; L-tryptophan biosynthesis; L-tryptophan from chorismate: step 4/5. This is Indole-3-glycerol phosphate synthase from Pyrococcus abyssi (strain GE5 / Orsay).